A 707-amino-acid polypeptide reads, in one-letter code: Molybdenum cofactor sulfurase (707 aa).

Position 206 is an N6-(pyridoxal phosphate)lysine (K206). C365 is an active-site residue. Residues 558 to 705 (QWLENALDMT…VEAGSAVRFF (148 aa)) form the MOSC domain.

Belongs to the class-V pyridoxal-phosphate-dependent aminotransferase family. MOCOS subfamily. Pyridoxal 5'-phosphate is required as a cofactor.

The catalysed reaction is Mo-molybdopterin + L-cysteine + AH2 = thio-Mo-molybdopterin + L-alanine + A + H2O. It participates in cofactor biosynthesis; molybdopterin biosynthesis. In terms of biological role, sulfurates the molybdenum cofactor. Sulfation of molybdenum is essential for xanthine dehydrogenase (XDH) and aldehyde oxidase (ADO) enzymes in which molybdenum cofactor is liganded by 1 oxygen and 1 sulfur atom in active form. The chain is Molybdenum cofactor sulfurase (mocs-1) from Caenorhabditis briggsae.